The chain runs to 1022 residues: D-2-hydroxyglutarate dehydrogenase (1022 aa).

The region spanning 53-286 (YQLLPDAVLF…SEARLDITPL (234 aa)) is the FAD-binding PCMH-type domain. (R)-2-hydroxyglutarate is bound by residues Arg407 and His505. Residues 667-700 (FSHEVKEAMSGCLACKACSTQCPIKIDVPAFRSR) form the 4Fe-4S ferredoxin-type domain. Cys678, Cys681, Cys684, and Cys688 together coordinate [4Fe-4S] cluster.

In the N-terminal section; belongs to the FAD-binding oxidoreductase/transferase type 4 family. Homotetramer. [4Fe-4S] cluster serves as cofactor. Requires FAD as cofactor.

It catalyses the reaction (R)-2-hydroxyglutarate + A = 2-oxoglutarate + AH2. Its activity is regulated as follows. Activity is completely inhibited by the addition of 0.5 mM Mn(2+), Ni(2+), or Co(2+) and partially inhibited by 0.5 mM Zn(2+). Its function is as follows. Catalyzes the oxidation of D-2-hydroxyglutarate (D-2-HGA) to 2-oxoglutarate. Appears to be the only D2HGDH in P.ananatis, providing the way to recycle D-2-HGA produced during L-serine synthesis by SerA, by converting it back to 2-oxoglutarate. Is involved in the utilization of D-2-HGA, that can support the growth of P.ananatis as a sole carbon source, although it barely serves as a good substrate. The physiological molecule that functions as the primary electron acceptor during D-2-HGA oxidation by YdiJ in P.ananatis is unknown. Shows strict substrate specificity towards D-2-HGA, since it has no detectable activity on L-2-hydroxyglutarate, L-malate, D-malate, L-lactate, D-lactate, L-tartrate, D-tartrate, L-glycerate, D-glycerate, glutarate, or pyruvate. The sequence is that of D-2-hydroxyglutarate dehydrogenase from Pantoea ananatis (strain AJ13355).